The sequence spans 158 residues: MHKRAIYPGTFDPVTNGHADLIERAAKLFQHVVIGIAANPSKQPRFTLDERVQLLKLVTAHLDNVEVVGFSGLLVDFAKDQQASVLVRGLRAVSDFEYEFQLANMNRRLDPDLESVFLTPSEENSFISSTLVKEVALHGGDVSQFVHPEVSKALLSKG.

Threonine 10 contacts substrate. ATP is bound by residues 10 to 11 and histidine 18; that span reads TF. Substrate contacts are provided by lysine 42, leucine 74, and arginine 88. Residues 89 to 91, glutamate 99, and 124 to 130 contribute to the ATP site; these read GLR and NSFISST.

This sequence belongs to the bacterial CoaD family. In terms of assembly, homohexamer. Mg(2+) serves as cofactor.

It localises to the cytoplasm. The enzyme catalyses (R)-4'-phosphopantetheine + ATP + H(+) = 3'-dephospho-CoA + diphosphate. It functions in the pathway cofactor biosynthesis; coenzyme A biosynthesis; CoA from (R)-pantothenate: step 4/5. Functionally, reversibly transfers an adenylyl group from ATP to 4'-phosphopantetheine, yielding dephospho-CoA (dPCoA) and pyrophosphate. In Shewanella woodyi (strain ATCC 51908 / MS32), this protein is Phosphopantetheine adenylyltransferase.